The primary structure comprises 396 residues: Elongation factor Tu (396 aa).

The tr-type G domain maps to 10–205; the sequence is KEHVNIGTIG…AVDNYIETPV (196 aa). The segment at 19–26 is G1; the sequence is GHVDHGKT. 19-26 is a binding site for GTP; that stretch reads GHVDHGKT. Thr-26 serves as a coordination point for Mg(2+). The segment at 60–64 is G2; the sequence is GITIN. A G3 region spans residues 81-84; that stretch reads DCPG. GTP-binding positions include 81–85 and 136–139; these read DCPGH and NKVD. Positions 136–139 are G4; the sequence is NKVD. The G5 stretch occupies residues 175–177; that stretch reads SAL.

This sequence belongs to the TRAFAC class translation factor GTPase superfamily. Classic translation factor GTPase family. EF-Tu/EF-1A subfamily. As to quaternary structure, monomer.

Its subcellular location is the cytoplasm. It carries out the reaction GTP + H2O = GDP + phosphate + H(+). Functionally, GTP hydrolase that promotes the GTP-dependent binding of aminoacyl-tRNA to the A-site of ribosomes during protein biosynthesis. This is Elongation factor Tu from Mycoplasmopsis pulmonis (strain UAB CTIP) (Mycoplasma pulmonis).